We begin with the raw amino-acid sequence, 566 residues long: MKQSMVFSPTLREVPADAEIKSHQLLLRAGFMRQNASGIYSFLPFGLKVLHKVERIVREEMERAGAVELLMPAMQAAELWQESGRWYSYGSELMRMKDRNAREFALGATHEEVITDLVRDEVKSYKKLPLTLYQIQTKFRDEQRPRFGLLRGREFLMKDAYSFHATQESLDEVYDRLYKAYSNIFARCGLNFRAVIADSGAMGGKDTHEFMVLSDVGEDTIAYSDTSDYAANIEMAPVVATYTKSDEAEKALEKVATPDQKAIEEVSAFLNIEAEKCIKSMVFKVDEKLVVVLVRGDHEVNDVKVKNVYGASVVELASHEEVKELLNCEVGSLGPIGVTGDIEIIADHAVASIVNGCSGANEEGFHYVNVNPERDFKVSQYTDLRFIQEGDQSPDGNGTILFARGIEVGHVFKLGTRYSEAMNATFLDENGKTQPLIMGCYGIGVSRTVAAIAEQFNDENGLVWPKAVAPFHVHVIPVNMKSDAQREMGENIYNSLQEQGYEVLLDDRAERAGVKFADADLFGLPVRVTVGKKADEGIVEVKVRATGESEEVKVEELQTYIANILK.

Belongs to the class-II aminoacyl-tRNA synthetase family. ProS type 1 subfamily. Homodimer.

It is found in the cytoplasm. The enzyme catalyses tRNA(Pro) + L-proline + ATP = L-prolyl-tRNA(Pro) + AMP + diphosphate. Its function is as follows. Catalyzes the attachment of proline to tRNA(Pro) in a two-step reaction: proline is first activated by ATP to form Pro-AMP and then transferred to the acceptor end of tRNA(Pro). As ProRS can inadvertently accommodate and process non-cognate amino acids such as alanine and cysteine, to avoid such errors it has two additional distinct editing activities against alanine. One activity is designated as 'pretransfer' editing and involves the tRNA(Pro)-independent hydrolysis of activated Ala-AMP. The other activity is designated 'posttransfer' editing and involves deacylation of mischarged Ala-tRNA(Pro). The misacylated Cys-tRNA(Pro) is not edited by ProRS. This chain is Proline--tRNA ligase, found in Bacillus cereus (strain AH187).